The sequence spans 502 residues: MGFEDDPYRDVDGEPIVDFDDFGNDREPSTEPLQDFDEDLADDIGDWDGEGSQTPVYDNDKVAKPRKRLVKKSSSERVTIDVPELIDEDVDDAEFDEFMGGRGGGSTDYDDKVGRKRKKEKERSSSGSGKEKRHKFPNRGERKSEEIDEMWKSIAHNPENDEEGVRTMDDDNFIDDTGLDPSERYGGDAGDRSPTHYPQAEEGEDEDEVNNLFKMGKKKKKTERNPAEIALLVENVMAELEVTAEEDAELNRQGKPAINKLKKLSLLTDVLGKKQLQTEFLDHGVLTLLKNWLEPLPDGSLPNINIRAAILRVLTDFPIDLDQYDRREQLKKSGLGKVIMFLSKSDEETNSNRRLAKDLVDKWSRPIFNKSTRFEDMRNLDEDRVPYRRPPVKKPSNKATMESRDGDFDLEIRERKTGLTSGQSSRGDRQMTMRPEATPLDFLIRPQSKIDPDEIIARAKQVSQDQRRVKMNKKLQQLKGTKKKRLQATKVSVEGRGMIKYL.

Residues 1 to 12 (MGFEDDPYRDVD) are compositionally biased toward basic and acidic residues. Disordered stretches follow at residues 1-61 (MGFE…DNDK) and 87-208 (DEDV…DEDE). Composition is skewed to acidic residues over residues 13-22 (GEPIVDFDDF), 34-49 (QDFDEDLADDIGDWDG), and 87-97 (DEDVDDAEFDE). 2 stretches are compositionally biased toward basic and acidic residues: residues 138-151 (NRGERKSEEIDEMW) and 181-194 (PSERYGGDAGDRSP). Tyrosine 185 carries the phosphotyrosine modification. A TFIIS N-terminal domain is found at 287–370 (TLLKNWLEPL…DKWSRPIFNK (84 aa)). The tract at residues 385–434 (VPYRRPPVKKPSNKATMESRDGDFDLEIRERKTGLTSGQSSRGDRQMTMR) is disordered. The segment covering 401–417 (MESRDGDFDLEIRERKT) has biased composition (basic and acidic residues).

It belongs to the IWS1 family. Interacts with BZR2/BES1 and SPT6 (via N-terminus). Interacts with ASHH2/SDG8.

It localises to the nucleus. In terms of biological role, transcription factor involved in RNA polymerase II (RNAPII) transcription regulation. Involved in transcription elongation. May function at post-recruitment and elongation steps of transcription. May be recruited by BZR2/BES1 to target genes and promote their expression during transcription elongation process. Required for brassinosteroid (BR)-induced gene expression. Required the for regulation of numerous nitrogen-responsive genes in roots. Acts in roots to repress NRT2.1 transcription in response to high nitrogen supply. This repression is associated with an IWS1-dependent increase of trimethylation on 'Lys-27' H3K27me3 at the NRT2.1 locus. The protein is Protein IWS1 homolog 1 of Arabidopsis thaliana (Mouse-ear cress).